We begin with the raw amino-acid sequence, 701 residues long: Polyribonucleotide nucleotidyltransferase (701 aa).

Mg(2+) is bound by residues D490 and D496. The region spanning 557 to 616 is the KH domain; it reads PKVETMTIKPEKIRDVIGPGGKKINEIIDETGVKLDIEQDGTIFIGAVDQDMINRAREII. The S1 motif domain occupies 626–694; sequence GQVYNAKVRR…DKGRVNASHR (69 aa).

The protein belongs to the polyribonucleotide nucleotidyltransferase family. Mg(2+) serves as cofactor.

It localises to the cytoplasm. It carries out the reaction RNA(n+1) + phosphate = RNA(n) + a ribonucleoside 5'-diphosphate. In terms of biological role, involved in mRNA degradation. Catalyzes the phosphorolysis of single-stranded polyribonucleotides processively in the 3'- to 5'-direction. This is Polyribonucleotide nucleotidyltransferase from Staphylococcus carnosus (strain TM300).